A 190-amino-acid polypeptide reads, in one-letter code: Ribose 1,5-bisphosphate phosphokinase PhnN (190 aa).

An ATP-binding site is contributed by 11–18; that stretch reads GPSGSGKD.

It belongs to the ribose 1,5-bisphosphokinase family.

The catalysed reaction is alpha-D-ribose 1,5-bisphosphate + ATP = 5-phospho-alpha-D-ribose 1-diphosphate + ADP. It participates in metabolic intermediate biosynthesis; 5-phospho-alpha-D-ribose 1-diphosphate biosynthesis; 5-phospho-alpha-D-ribose 1-diphosphate from D-ribose 5-phosphate (route II): step 3/3. In terms of biological role, catalyzes the phosphorylation of ribose 1,5-bisphosphate to 5-phospho-D-ribosyl alpha-1-diphosphate (PRPP). This chain is Ribose 1,5-bisphosphate phosphokinase PhnN, found in Thiobacillus denitrificans (strain ATCC 25259 / T1).